The chain runs to 160 residues: Serine-protein kinase RsbW (160 aa).

The protein belongs to the anti-sigma-factor family.

It catalyses the reaction L-seryl-[protein] + ATP = O-phospho-L-seryl-[protein] + ADP + H(+). It carries out the reaction L-threonyl-[protein] + ATP = O-phospho-L-threonyl-[protein] + ADP + H(+). In terms of biological role, negative regulator of sigma-B activity. Phosphorylates and inactivates its specific antagonist protein, RsbV. Upon phosphorylation of RsbV, RsbW is released and binds to sigma-B, thereby blocking its ability to form an RNA polymerase holoenzyme (E-sigma-B). The protein is Serine-protein kinase RsbW of Bacillus velezensis (strain DSM 23117 / BGSC 10A6 / LMG 26770 / FZB42) (Bacillus amyloliquefaciens subsp. plantarum).